Consider the following 70-residue polypeptide: Conotoxin Im11.11 (70 aa).

The N-terminal stretch at 1-25 (MFRLTSVGCILLVIAFLNLVGLTNA) is a signal peptide. Intrachain disulfides connect Cys26–Cys40, Cys33–Cys45, Cys39–Cys49, and Cys44–Cys53. Position 56 is a proline amide (Pro56). Residues 60 to 70 (TRLQGFFKHRR) constitute a propeptide that is removed on maturation.

Belongs to the conotoxin I2 superfamily. Expressed by the venom duct.

Its subcellular location is the secreted. Probable neurotoxin. This is Conotoxin Im11.11 from Conus imperialis (Imperial cone).